We begin with the raw amino-acid sequence, 368 residues long: Alanine racemase (368 aa).

Lys-40 acts as the Proton acceptor; specific for D-alanine in catalysis. Lys-40 is subject to N6-(pyridoxal phosphate)lysine. Arg-134 provides a ligand contact to substrate. Residue Tyr-263 is the Proton acceptor; specific for L-alanine of the active site. Position 310 (Met-310) interacts with substrate.

It belongs to the alanine racemase family. Requires pyridoxal 5'-phosphate as cofactor.

It catalyses the reaction L-alanine = D-alanine. It functions in the pathway amino-acid biosynthesis; D-alanine biosynthesis; D-alanine from L-alanine: step 1/1. In terms of biological role, catalyzes the interconversion of L-alanine and D-alanine. May also act on other amino acids. This is Alanine racemase (alr) from Listeria monocytogenes serotype 4b (strain F2365).